Consider the following 402-residue polypeptide: NADH-quinone oxidoreductase subunit D (402 aa).

Belongs to the complex I 49 kDa subunit family. As to quaternary structure, NDH-1 is composed of 14 different subunits. Subunits NuoB, C, D, E, F, and G constitute the peripheral sector of the complex.

It localises to the cell inner membrane. The enzyme catalyses a quinone + NADH + 5 H(+)(in) = a quinol + NAD(+) + 4 H(+)(out). In terms of biological role, NDH-1 shuttles electrons from NADH, via FMN and iron-sulfur (Fe-S) centers, to quinones in the respiratory chain. The immediate electron acceptor for the enzyme in this species is believed to be ubiquinone. Couples the redox reaction to proton translocation (for every two electrons transferred, four hydrogen ions are translocated across the cytoplasmic membrane), and thus conserves the redox energy in a proton gradient. The protein is NADH-quinone oxidoreductase subunit D of Cereibacter sphaeroides (strain ATCC 17029 / ATH 2.4.9) (Rhodobacter sphaeroides).